The primary structure comprises 567 residues: uncharacterized protein (567 aa).

Helical transmembrane passes span L65 to A85, L92 to I112, W190 to P210, V220 to G240, A302 to A322, L353 to A373, I412 to F432, V434 to T454, I473 to V493, and W503 to A523.

The protein belongs to the amino acid-polyamine-organocation (APC) superfamily.

The protein resides in the membrane. This is an uncharacterized protein from Schizosaccharomyces pombe (strain 972 / ATCC 24843) (Fission yeast).